Reading from the N-terminus, the 547-residue chain is Chaperonin GroEL (547 aa).

ATP contacts are provided by residues 29 to 32 (TLGP), 86 to 90 (DGTTT), G413, and D498.

Belongs to the chaperonin (HSP60) family. As to quaternary structure, forms a cylinder of 14 subunits composed of two heptameric rings stacked back-to-back. Interacts with the co-chaperonin GroES.

It is found in the cytoplasm. The catalysed reaction is ATP + H2O + a folded polypeptide = ADP + phosphate + an unfolded polypeptide.. Its function is as follows. Together with its co-chaperonin GroES, plays an essential role in assisting protein folding. The GroEL-GroES system forms a nano-cage that allows encapsulation of the non-native substrate proteins and provides a physical environment optimized to promote and accelerate protein folding. The chain is Chaperonin GroEL from Herpetosiphon aurantiacus (strain ATCC 23779 / DSM 785 / 114-95).